The following is an 83-amino-acid chain: Cytochrome b559 subunit alpha (83 aa).

A helical transmembrane segment spans residues 21–35 (VIHSITIPSLFIAGW). His-23 is a heme binding site.

It belongs to the PsbE/PsbF family. Heterodimer of an alpha subunit and a beta subunit. PSII is composed of 1 copy each of membrane proteins PsbA, PsbB, PsbC, PsbD, PsbE, PsbF, PsbH, PsbI, PsbJ, PsbK, PsbL, PsbM, PsbT, PsbX, PsbY, PsbZ, Psb30/Ycf12, at least 3 peripheral proteins of the oxygen-evolving complex and a large number of cofactors. It forms dimeric complexes. Heme b is required as a cofactor.

Its subcellular location is the plastid. It localises to the chloroplast thylakoid membrane. Its function is as follows. This b-type cytochrome is tightly associated with the reaction center of photosystem II (PSII). PSII is a light-driven water:plastoquinone oxidoreductase that uses light energy to abstract electrons from H(2)O, generating O(2) and a proton gradient subsequently used for ATP formation. It consists of a core antenna complex that captures photons, and an electron transfer chain that converts photonic excitation into a charge separation. This Chara vulgaris (Common stonewort) protein is Cytochrome b559 subunit alpha.